The following is a 596-amino-acid chain: Sodium/mannose cotransporter SLC5A10 (596 aa).

Over 1 to 15 (MAANSTSDLHTPGTQ) the chain is Extracellular. N-linked (GlcNAc...) asparagine glycosylation occurs at Asn4. Residues 16 to 36 (LSVADIIVITVYFALNVAVGI) form a helical membrane-spanning segment. The Cytoplasmic portion of the chain corresponds to 37–72 (WSSCRASRNTVNGYFLAGRDMTWWPIGASLFASSEG). Residues 73 to 93 (SGLFIGLAGSGAAGGLAVAGF) form a helical membrane-spanning segment. The Extracellular portion of the chain corresponds to 94–99 (EWNATY). Asn96 carries an N-linked (GlcNAc...) asparagine glycan. The chain crosses the membrane as a helical span at residues 100–120 (VLLALAWVFVPIYISSEIVTL). Residues 121 to 149 (PEYIQKRYGGQRIRMYLSVLSLLLSVFTK) lie on the Cytoplasmic side of the membrane. 2 positions are modified to phosphoserine: Ser141 and Ser145. Phosphothreonine is present on Thr148. The chain crosses the membrane as a helical span at residues 150 to 170 (ISLDLYAGALFVHICLGWNFY). Residues 171–173 (LST) lie on the Extracellular side of the membrane. The chain crosses the membrane as a helical span at residues 174 to 194 (ILTLGITALYTIAGGLAAVIY). Residues 195–200 (TDALQT) lie on the Cytoplasmic side of the membrane. A helical transmembrane segment spans residues 201–221 (LIMVVGAVILTIKAFDQIGGY). Topologically, residues 222–264 (GQLEAAYAQAIPSRTIANTTCHLPRTDAMHMFRDPHTGDLPWT) are extracellular. The helical transmembrane segment at 265-285 (GMTFGLTIMATWYWCTDQVIV) threads the bilayer. Topologically, residues 286–300 (QRSLSARDLNHAKAG) are cytoplasmic. The helical transmembrane segment at 301-321 (SILASYLKMLPMGLIIMPGMI) threads the bilayer. At 322 to 355 (SRALFPDDVGCVVPSECLRACGAEVGCSNIAYPK) the chain is on the extracellular side. A helical transmembrane segment spans residues 356–376 (LVMELMPIGLRGLMIAVMLAA). Over 377 to 409 (LMSSLTSIFNSSSTLFTMDIWRRLRPRSGEREL) the chain is Cytoplasmic. The helical transmembrane segment at 410–430 (LLVGRLVIVALIGVSVAWIPV) threads the bilayer. Over 431–443 (LQDSNSGQLFIYM) the chain is Extracellular. A helical membrane pass occupies residues 444–464 (QSVTSSLAPPVTAVFVLGVFW). Over 465-471 (RRANEQG) the chain is Cytoplasmic. A helical transmembrane segment spans residues 472-492 (AFWGLIAGLVVGATRLVLEFL). Residues 493 to 513 (NPAPPCGEPDTRPAVLGSIHY) lie on the Extracellular side of the membrane. Residues 514–534 (LHFAVALFALSGAVVVAGSLL) traverse the membrane as a helical segment. The Cytoplasmic segment spans residues 535–575 (TPPPQSVQIENLTWWTLAQDVPLGTKAGDGQTPQKHAFWAR). A helical membrane pass occupies residues 576–596 (VCGFNAILLMCVNIFFYAYFA).

This sequence belongs to the sodium:solute symporter (SSF) (TC 2.A.21) family. Predominantly expressed at high levels in kidney. Very low expression is detected in testes. In terms of tissue distribution, expressed in kidney. As to expression, the most abundant isoform expressed in kidney.

It is found in the apical cell membrane. It catalyses the reaction D-mannose(out) + Na(+)(out) = D-mannose(in) + Na(+)(in). It carries out the reaction D-fructopyranose(out) + Na(+)(out) = D-fructopyranose(in) + Na(+)(in). With respect to regulation, inhibited by phlorizin. In terms of biological role, electrogenic Na+-coupled sugar symporter that actively transports D-mannose or D-fructose at the plasma membrane, with a Na+ to sugar coupling ratio of 1:1. Transporter activity is driven by a transmembrane Na+ electrochemical gradient set by the Na+/K+ pump. Exclusively recognizes sugar substrates having a pyranose ring with an axial hydroxyl group on carbon 2. Has likely evolved to enable renal reabsorption of D-mannose, an important constituent of oligosaccharide chains of glycoproteins. Contributes to dietary D-fructose reabsorption from glomerular filtrate across the brush border of the kidney. Appears to have no transporter activity. This Homo sapiens (Human) protein is Sodium/mannose cotransporter SLC5A10 (SLC5A10).